A 668-amino-acid polypeptide reads, in one-letter code: DNA ligase (668 aa).

Residues 37–41, 86–87, and Glu-116 contribute to the NAD(+) site; these read DNVYD and SM. Lys-118 serves as the catalytic N6-AMP-lysine intermediate. The NAD(+) site is built by Arg-139, Glu-173, Lys-288, and Lys-312. Residues Cys-406, Cys-409, Cys-424, and Cys-429 each coordinate Zn(2+). One can recognise a BRCT domain in the interval 591–668; the sequence is IPDNPFKDKT…TEEEAIAQIK (78 aa).

Belongs to the NAD-dependent DNA ligase family. LigA subfamily. Mg(2+) is required as a cofactor. The cofactor is Mn(2+).

The enzyme catalyses NAD(+) + (deoxyribonucleotide)n-3'-hydroxyl + 5'-phospho-(deoxyribonucleotide)m = (deoxyribonucleotide)n+m + AMP + beta-nicotinamide D-nucleotide.. In terms of biological role, DNA ligase that catalyzes the formation of phosphodiester linkages between 5'-phosphoryl and 3'-hydroxyl groups in double-stranded DNA using NAD as a coenzyme and as the energy source for the reaction. It is essential for DNA replication and repair of damaged DNA. In Lactobacillus acidophilus (strain ATCC 700396 / NCK56 / N2 / NCFM), this protein is DNA ligase.